Here is a 357-residue protein sequence, read N- to C-terminus: MTTPQDIIRRDVLAMTSYPVPDASGFVKLDAMENPYPLPEPLAAALGERLAQVALNRYPAPRPAALLDKLRHAMGVPAGCEVLLGNGSDEIISMMSMACAKPGAKVLAPVPGFVMYELSAKLAQLEFVGVPLKADLTLDVDAMLAAIAEHRPAIVYLAYPNNPTGTLYDDADIERIVAAARHSLIVIDEAYQPFAVRSWLPRAAEFDNVVVMRTVSKLGLAGIRLGYLVGSPAWLTEFDKVRPPYNINVLTQATADFLLDHLDVLDAQAADLRAERTRLAQEVAALPGTTVFPSAGNFLLVRVPDAAAVFDALLTERVLVKNVSKMHPLLAECVRLTVGSPDENARLLAALKLALPG.

The residue at position 217 (Lys217) is an N6-(pyridoxal phosphate)lysine.

Belongs to the class-II pyridoxal-phosphate-dependent aminotransferase family. Histidinol-phosphate aminotransferase subfamily. Homodimer. The cofactor is pyridoxal 5'-phosphate.

The enzyme catalyses L-histidinol phosphate + 2-oxoglutarate = 3-(imidazol-4-yl)-2-oxopropyl phosphate + L-glutamate. The protein operates within amino-acid biosynthesis; L-histidine biosynthesis; L-histidine from 5-phospho-alpha-D-ribose 1-diphosphate: step 7/9. In Burkholderia lata (strain ATCC 17760 / DSM 23089 / LMG 22485 / NCIMB 9086 / R18194 / 383), this protein is Histidinol-phosphate aminotransferase 1.